The chain runs to 869 residues: Ribonucleoside-diphosphate reductase large chain 2 (869 aa).

The region spanning Met1–Lys92 is the ATP-cone domain. Residues Lys5–Arg6, Glu11–Lys17, Thr53, and Asp57 each bind ATP. 2 residues coordinate GDP: Ser202 and Ser217. Residues Cys218 and Cys443 are joined by a disulfide bond. DTTP is bound by residues Asp226 to Ile228, Lys243, Arg256, and Ala263 to Gly264. Phosphoserine is present on Ser227. Residue Lys387 forms a Glycyl lysine isopeptide (Lys-Gly) (interchain with G-Cter in ubiquitin) linkage. A GDP-binding site is contributed by Asn426. Asn426 acts as the Proton acceptor in catalysis. Catalysis depends on Cys428, which acts as the Cysteine radical intermediate. GDP is bound by residues Glu430 and Thr608–Thr611. Glu430 acts as the Proton acceptor in catalysis. A disordered region spans residues Ser793–Glu843. A phosphoserine mark is found at Ser806, Ser827, and Ser868. Low complexity predominate over residues Ser806–Ser820.

Belongs to the ribonucleoside diphosphate reductase large chain family. Heterotetramer of two large (R1) and two small (R2) subunits. S.cerevisiae has two different R1 subunits (RNR1 and RNR3) and two different R2 subunits (RNR2 and RNR4). The functional form of the small subunits is a RNR2-RNR4 heterodimer, where RNR2 provides the iron-radical center and RNR4 is required for proper folding of RNR2 and assembly with the large subunits. Under normal growth conditions, the active form of the large subunits is a homodimer of the constitutively expressed RNR1. In damaged cells or cells arrested for DNA synthesis, the reductase consists of multiple species because of the association of the small subunits (RNR2-RNR4) with either the RNR1 homodimer or a heterodimer of RNR1 and the damage-inducible RNR3.

The protein localises to the cytoplasm. It carries out the reaction a 2'-deoxyribonucleoside 5'-diphosphate + [thioredoxin]-disulfide + H2O = a ribonucleoside 5'-diphosphate + [thioredoxin]-dithiol. Under complex allosteric control mediated by deoxynucleoside triphosphates and ATP binding to separate specificity and activation sites on the large subunit. The type of nucleotide bound at the specificity site determines substrate preference. It seems probable that ATP makes the enzyme reduce CDP and UDP, dGTP favors ADP reduction and dTTP favors GDP reduction. Stimulated by ATP and inhibited by dATP binding to the activity site. Its function is as follows. Provides the precursors necessary for DNA synthesis. Catalyzes the biosynthesis of deoxyribonucleotides from the corresponding ribonucleotides. The protein is Ribonucleoside-diphosphate reductase large chain 2 (RNR3) of Saccharomyces cerevisiae (strain ATCC 204508 / S288c) (Baker's yeast).